Reading from the N-terminus, the 269-residue chain is Shikimate dehydrogenase (NADP(+)) (269 aa).

Shikimate is bound by residues 15–17 (SLS) and threonine 62. Catalysis depends on lysine 66, which acts as the Proton acceptor. Asparagine 86 and aspartate 99 together coordinate shikimate. Residues 123-127 (GAGGA), 146-151 (NRTTAK), and leucine 213 each bind NADP(+). Tyrosine 215 lines the shikimate pocket. Glycine 236 contacts NADP(+).

The protein belongs to the shikimate dehydrogenase family. Homodimer.

The enzyme catalyses shikimate + NADP(+) = 3-dehydroshikimate + NADPH + H(+). The protein operates within metabolic intermediate biosynthesis; chorismate biosynthesis; chorismate from D-erythrose 4-phosphate and phosphoenolpyruvate: step 4/7. Functionally, involved in the biosynthesis of the chorismate, which leads to the biosynthesis of aromatic amino acids. Catalyzes the reversible NADPH linked reduction of 3-dehydroshikimate (DHSA) to yield shikimate (SA). In Methanocella arvoryzae (strain DSM 22066 / NBRC 105507 / MRE50), this protein is Shikimate dehydrogenase (NADP(+)).